Consider the following 91-residue polypeptide: MGIFDWKHWIVILIVVVLVFGTKKLKGLGSDVGESIKGFRKAMNDDDKPAEQPAPQPQQAQAAPQGSPLNQPHTIDAQAHKVDEPIRKDQV.

A helical membrane pass occupies residues 1–21; the sequence is MGIFDWKHWIVILIVVVLVFG. The tract at residues 42–91 is disordered; that stretch reads AMNDDDKPAEQPAPQPQQAQAAPQGSPLNQPHTIDAQAHKVDEPIRKDQV. The span at 51 to 65 shows a compositional bias: low complexity; the sequence is EQPAPQPQQAQAAPQ. Residues 78 to 91 are compositionally biased toward basic and acidic residues; that stretch reads QAHKVDEPIRKDQV.

This sequence belongs to the TatA/E family. In terms of assembly, the Tat system comprises two distinct complexes: a TatABC complex, containing multiple copies of TatA, TatB and TatC subunits, and a separate TatA complex, containing only TatA subunits. Substrates initially bind to the TatABC complex, which probably triggers association of the separate TatA complex to form the active translocon.

The protein localises to the cell inner membrane. Functionally, part of the twin-arginine translocation (Tat) system that transports large folded proteins containing a characteristic twin-arginine motif in their signal peptide across membranes. TatA could form the protein-conducting channel of the Tat system. This is Sec-independent protein translocase protein TatA from Pseudomonas savastanoi pv. phaseolicola (strain 1448A / Race 6) (Pseudomonas syringae pv. phaseolicola (strain 1448A / Race 6)).